Here is a 347-residue protein sequence, read N- to C-terminus: 4-hydroxy-2-oxovalerate aldolase (347 aa).

Residues 2–252 enclose the Pyruvate carboxyltransferase domain; that stretch reads ILISDATLRD…DTRTTFEHVM (251 aa). 10 to 11 contributes to the substrate binding site; it reads RD. Aspartate 11 lines the Mn(2+) pocket. Histidine 14 acts as the Proton acceptor in catalysis. Positions 164 and 191 each coordinate substrate. Residues histidine 191 and histidine 193 each coordinate Mn(2+).

The protein belongs to the 4-hydroxy-2-oxovalerate aldolase family.

It catalyses the reaction (S)-4-hydroxy-2-oxopentanoate = acetaldehyde + pyruvate. In Burkholderia thailandensis (strain ATCC 700388 / DSM 13276 / CCUG 48851 / CIP 106301 / E264), this protein is 4-hydroxy-2-oxovalerate aldolase (mhpE).